The following is a 465-amino-acid chain: Glucose-1-phosphate adenylyltransferase (465 aa).

Alpha-D-glucose 1-phosphate contacts are provided by residues glycine 164, 181-182 (EK), and serine 199.

Belongs to the bacterial/plant glucose-1-phosphate adenylyltransferase family. Homotetramer.

The enzyme catalyses alpha-D-glucose 1-phosphate + ATP + H(+) = ADP-alpha-D-glucose + diphosphate. The protein operates within glycan biosynthesis; glycogen biosynthesis. Functionally, involved in the biosynthesis of ADP-glucose, a building block required for the elongation reactions to produce glycogen. Catalyzes the reaction between ATP and alpha-D-glucose 1-phosphate (G1P) to produce pyrophosphate and ADP-Glc. This Arthrobacter sp. (strain FB24) protein is Glucose-1-phosphate adenylyltransferase.